The primary structure comprises 369 residues: MQQLPIEKYDELLAEKCRKLTALLAPFDAPALTVFPSPTQHFRMRAEFRLWHDYSENRGGNLYHIMFDKTTKQRYRVDQFPVASQLINRMMATILPLLKEQDVLSRKLFQIDYLSTLSEQIIVSLLYHKTLTDEWQEAAQALKVRLRNLGFSVQIIGRATKQKICLDQDFVDEELSVGDKKYVYRQVENSFTQPNAALNCKMLEWAIDCTRDSQGDLLELYCGNGNFSIALAQNFRKVLATEIAKPSVAAAQFNIAANQVDNLQIIRMSAEEFTQAVNGVRAFNRLKGIDLQAYECHTIFVDPPRAGLDSDTVKLVQKYDRILYISCNPQTLCENLQILSQTHRIERAALFDQFPYTEHMEAGVWLMRK.

Positions 193, 221, 226, 242, and 302 each coordinate S-adenosyl-L-methionine. The active-site Nucleophile is the Cys327. The Proton acceptor role is filled by Glu361.

This sequence belongs to the class I-like SAM-binding methyltransferase superfamily. RNA M5U methyltransferase family. TrmA subfamily.

It carries out the reaction uridine(54) in tRNA + S-adenosyl-L-methionine = 5-methyluridine(54) in tRNA + S-adenosyl-L-homocysteine + H(+). The catalysed reaction is uridine(341) in tmRNA + S-adenosyl-L-methionine = 5-methyluridine(341) in tmRNA + S-adenosyl-L-homocysteine + H(+). Functionally, dual-specificity methyltransferase that catalyzes the formation of 5-methyluridine at position 54 (m5U54) in all tRNAs, and that of position 341 (m5U341) in tmRNA (transfer-mRNA). In Actinobacillus succinogenes (strain ATCC 55618 / DSM 22257 / CCUG 43843 / 130Z), this protein is tRNA/tmRNA (uracil-C(5))-methyltransferase.